Consider the following 200-residue polypeptide: Holliday junction branch migration complex subunit RuvA (200 aa).

Residues 1 to 63 (MYAYIKGTLS…EDAQLLYGFI (63 aa)) form a domain I region. The tract at residues 64 to 142 (NEEEKEMFLS…ITEENSDDLL (79 aa)) is domain II. The interval 143-149 (QTQVNGN) is flexible linker. The domain III stretch occupies residues 150-200 (EQNQIISEALLALQALGYSKRELTKVEKSLNKHNVNSVDEAVKIGLQTLVS).

This sequence belongs to the RuvA family. Homotetramer. Forms an RuvA(8)-RuvB(12)-Holliday junction (HJ) complex. HJ DNA is sandwiched between 2 RuvA tetramers; dsDNA enters through RuvA and exits via RuvB. An RuvB hexamer assembles on each DNA strand where it exits the tetramer. Each RuvB hexamer is contacted by two RuvA subunits (via domain III) on 2 adjacent RuvB subunits; this complex drives branch migration. In the full resolvosome a probable DNA-RuvA(4)-RuvB(12)-RuvC(2) complex forms which resolves the HJ.

The protein resides in the cytoplasm. Its function is as follows. The RuvA-RuvB-RuvC complex processes Holliday junction (HJ) DNA during genetic recombination and DNA repair, while the RuvA-RuvB complex plays an important role in the rescue of blocked DNA replication forks via replication fork reversal (RFR). RuvA specifically binds to HJ cruciform DNA, conferring on it an open structure. The RuvB hexamer acts as an ATP-dependent pump, pulling dsDNA into and through the RuvAB complex. HJ branch migration allows RuvC to scan DNA until it finds its consensus sequence, where it cleaves and resolves the cruciform DNA. This chain is Holliday junction branch migration complex subunit RuvA, found in Staphylococcus epidermidis (strain ATCC 35984 / DSM 28319 / BCRC 17069 / CCUG 31568 / BM 3577 / RP62A).